A 486-amino-acid chain; its full sequence is Carboxypeptidase Y homolog ARB_07161 (486 aa).

The signal sequence occupies residues 1–17; the sequence is MKGLLSLLLVGAANALA. An N-linked (GlcNAc...) asparagine glycan is attached at Asn-111. Ser-241 is a catalytic residue. Intrachain disulfides connect Cys-281–Cys-305, Cys-288–Cys-298, and Cys-327–Cys-334. Residue Asp-403 is part of the active site. Substrate is bound at residue Cys-406. N-linked (GlcNAc...) asparagine glycosylation is present at Asn-430. His-462 is an active-site residue.

This sequence belongs to the peptidase S10 family.

It is found in the secreted. The enzyme catalyses Release of a C-terminal amino acid with broad specificity.. Its function is as follows. Involved in degradation of small peptides. This is Carboxypeptidase Y homolog ARB_07161 from Arthroderma benhamiae (strain ATCC MYA-4681 / CBS 112371) (Trichophyton mentagrophytes).